The chain runs to 189 residues: Interferon alpha-5 (189 aa).

Residues 1 to 21 (MALPFVLLMALVVLNCKSICS) form the signal peptide. 2 cysteine pairs are disulfide-bonded: Cys-24–Cys-122 and Cys-52–Cys-162.

It belongs to the alpha/beta interferon family.

The protein localises to the secreted. Its function is as follows. Produced by macrophages, IFN-alpha have antiviral activities. Interferon stimulates the production of two enzymes: a protein kinase and an oligoadenylate synthetase. In Homo sapiens (Human), this protein is Interferon alpha-5 (IFNA5).